The sequence spans 647 residues: Glutamyl-tRNA(Gln) amidotransferase subunit B, mitochondrial (647 aa).

The segment at 87–106 is disordered; it reads QAKALKKSGHKKKKSSDNQT. Basic residues predominate over residues 90–100; the sequence is ALKKSGHKKKK.

This sequence belongs to the GatB/GatE family. GatB subfamily. In terms of assembly, subunit of the heterotrimeric GatCAB amidotransferase (AdT) complex, composed of A, B and C subunits.

Its subcellular location is the mitochondrion. The catalysed reaction is L-glutamyl-tRNA(Gln) + L-glutamine + ATP + H2O = L-glutaminyl-tRNA(Gln) + L-glutamate + ADP + phosphate + H(+). Its function is as follows. Allows the formation of correctly charged Gln-tRNA(Gln) through the transamidation of misacylated Glu-tRNA(Gln) in the mitochondria. The reaction takes place in the presence of glutamine and ATP through an activated gamma-phospho-Glu-tRNA(Gln). The sequence is that of Glutamyl-tRNA(Gln) amidotransferase subunit B, mitochondrial from Neurospora crassa (strain ATCC 24698 / 74-OR23-1A / CBS 708.71 / DSM 1257 / FGSC 987).